The following is a 331-amino-acid chain: Protein mono-ADP-ribosyltransferase PARP11 (331 aa).

At lysine 11 the chain carries N6-(ADP-ribosyl)lysine. One can recognise a WWE domain in the interval 15-99 (SDVDDMDTSD…VTGKQRLIKR (85 aa)). Residues cysteine 49 and cysteine 65 each carry the ADP-ribosylcysteine modification. Aspartate 80 carries the ADP-ribosyl aspartic acid modification. In terms of domain architecture, PARP catalytic spans 116 to 331 (IPMPTHWENV…IYPEYLIDFH (216 aa)).

It belongs to the ARTD/PARP family. Post-translationally, auto-mono-ADP-ribosylated. In terms of tissue distribution, predominantly expressed in testis, preferentially in postmeiotic germ cells. Also detectable in other tissues, including liver, lung, spleen, thymus and brain.

It localises to the nucleus. The protein resides in the nuclear pore complex. It catalyses the reaction L-aspartyl-[protein] + NAD(+) = 4-O-(ADP-D-ribosyl)-L-aspartyl-[protein] + nicotinamide. The enzyme catalyses L-cysteinyl-[protein] + NAD(+) = S-(ADP-D-ribosyl)-L-cysteinyl-[protein] + nicotinamide + H(+). The catalysed reaction is L-glutamyl-[protein] + NAD(+) = 5-O-(ADP-D-ribosyl)-L-glutamyl-[protein] + nicotinamide. It carries out the reaction L-lysyl-[protein] + NAD(+) = N(6)-(ADP-D-ribosyl)-L-lysyl-[protein] + nicotinamide + H(+). In terms of biological role, mono-ADP-ribosyltransferase that mediates mono-ADP-ribosylation of target proteins. Plays a role in nuclear envelope stability and nuclear remodeling during spermiogenesis. Inhibits the type I interferon activated signaling pathway. Mechanistically, mono-ADP-ribosylates beta-TrCP/BTRC to promote IFNAR1 ubiquitination and protect BTRC from ubiquitin-proteasome degradation. This chain is Protein mono-ADP-ribosyltransferase PARP11, found in Mus musculus (Mouse).